The chain runs to 382 residues: ATP phosphoribosyltransferase regulatory subunit (382 aa).

The protein belongs to the class-II aminoacyl-tRNA synthetase family. HisZ subfamily. As to quaternary structure, heteromultimer composed of HisG and HisZ subunits.

It is found in the cytoplasm. It participates in amino-acid biosynthesis; L-histidine biosynthesis; L-histidine from 5-phospho-alpha-D-ribose 1-diphosphate: step 1/9. In terms of biological role, required for the first step of histidine biosynthesis. May allow the feedback regulation of ATP phosphoribosyltransferase activity by histidine. The polypeptide is ATP phosphoribosyltransferase regulatory subunit (Lacticaseibacillus paracasei (strain ATCC 334 / BCRC 17002 / CCUG 31169 / CIP 107868 / KCTC 3260 / NRRL B-441) (Lactobacillus paracasei)).